The chain runs to 383 residues: tRNA-specific 2-thiouridylase MnmA (383 aa).

Residues 31 to 38 (GLSGGVDS) and Leu57 contribute to the ATP site. Cys118 (nucleophile) is an active-site residue. An intrachain disulfide couples Cys118 to Cys217. ATP is bound at residue Gly143. The segment at 167 to 169 (KDQ) is interaction with tRNA. The active-site Cysteine persulfide intermediate is the Cys217. The interval 322–323 (RY) is interaction with tRNA.

This sequence belongs to the MnmA/TRMU family.

Its subcellular location is the cytoplasm. The enzyme catalyses S-sulfanyl-L-cysteinyl-[protein] + uridine(34) in tRNA + AH2 + ATP = 2-thiouridine(34) in tRNA + L-cysteinyl-[protein] + A + AMP + diphosphate + H(+). Catalyzes the 2-thiolation of uridine at the wobble position (U34) of tRNA, leading to the formation of s(2)U34. The protein is tRNA-specific 2-thiouridylase MnmA of Synechococcus sp. (strain RCC307).